The chain runs to 219 residues: uncharacterized protein (219 aa).

A helical membrane pass occupies residues 13-32 (VFGLFLFSLIFFGLLSLATF).

The protein localises to the membrane. This is an uncharacterized protein from Aquifex aeolicus (strain VF5).